We begin with the raw amino-acid sequence, 378 residues long: Anhydro-N-acetylmuramic acid kinase (378 aa).

Position 9-16 (9-16 (GTSADGID)) interacts with ATP.

It belongs to the anhydro-N-acetylmuramic acid kinase family.

The enzyme catalyses 1,6-anhydro-N-acetyl-beta-muramate + ATP + H2O = N-acetyl-D-muramate 6-phosphate + ADP + H(+). Its pathway is amino-sugar metabolism; 1,6-anhydro-N-acetylmuramate degradation. It functions in the pathway cell wall biogenesis; peptidoglycan recycling. Catalyzes the specific phosphorylation of 1,6-anhydro-N-acetylmuramic acid (anhMurNAc) with the simultaneous cleavage of the 1,6-anhydro ring, generating MurNAc-6-P. Is required for the utilization of anhMurNAc either imported from the medium or derived from its own cell wall murein, and thus plays a role in cell wall recycling. In Synechococcus elongatus (strain ATCC 33912 / PCC 7942 / FACHB-805) (Anacystis nidulans R2), this protein is Anhydro-N-acetylmuramic acid kinase.